We begin with the raw amino-acid sequence, 396 residues long: Acetate kinase (396 aa).

Position 6 (Asn-6) interacts with Mg(2+). Lys-13 is a binding site for ATP. Residue Arg-89 coordinates substrate. Asp-145 (proton donor/acceptor) is an active-site residue. ATP contacts are provided by residues 205–209 (HLGNG), 280–282 (DMR), and 329–333 (GVGEN). Residue Glu-383 participates in Mg(2+) binding.

This sequence belongs to the acetokinase family. Homodimer. Mg(2+) is required as a cofactor. It depends on Mn(2+) as a cofactor.

The protein resides in the cytoplasm. The catalysed reaction is acetate + ATP = acetyl phosphate + ADP. The protein operates within metabolic intermediate biosynthesis; acetyl-CoA biosynthesis; acetyl-CoA from acetate: step 1/2. Functionally, catalyzes the formation of acetyl phosphate from acetate and ATP. Can also catalyze the reverse reaction. In Mesoplasma florum (strain ATCC 33453 / NBRC 100688 / NCTC 11704 / L1) (Acholeplasma florum), this protein is Acetate kinase.